The primary structure comprises 161 residues: Regulatory protein RecX (161 aa).

It belongs to the RecX family.

It is found in the cytoplasm. In terms of biological role, modulates RecA activity. In Halorhodospira halophila (strain DSM 244 / SL1) (Ectothiorhodospira halophila (strain DSM 244 / SL1)), this protein is Regulatory protein RecX.